The following is a 214-amino-acid chain: UPF0056 membrane protein aq_540 (214 aa).

6 consecutive transmembrane segments (helical) span residues 17–37 (FLSL…ISLM), 47–67 (VIAL…LISG), 73–93 (FMGI…FLIA), 122–142 (LIPL…VLVL), 153–173 (VALF…YSLS), and 185–205 (INLI…QFVV).

Belongs to the UPF0056 (MarC) family.

Its subcellular location is the cell membrane. This is UPF0056 membrane protein aq_540 from Aquifex aeolicus (strain VF5).